An 87-amino-acid polypeptide reads, in one-letter code: UPF0367 protein Syncc9902_0316 (87 aa).

It belongs to the UPF0367 family.

The polypeptide is UPF0367 protein Syncc9902_0316 (Synechococcus sp. (strain CC9902)).